A 152-amino-acid polypeptide reads, in one-letter code: Large ribosomal subunit protein bL9 (152 aa).

The protein belongs to the bacterial ribosomal protein bL9 family.

Its function is as follows. Binds to the 23S rRNA. This Synechococcus elongatus (strain ATCC 33912 / PCC 7942 / FACHB-805) (Anacystis nidulans R2) protein is Large ribosomal subunit protein bL9.